Reading from the N-terminus, the 396-residue chain is Tryptophan synthase beta chain (396 aa).

N6-(pyridoxal phosphate)lysine is present on K86.

Belongs to the TrpB family. In terms of assembly, tetramer of two alpha and two beta chains. Pyridoxal 5'-phosphate serves as cofactor.

The catalysed reaction is (1S,2R)-1-C-(indol-3-yl)glycerol 3-phosphate + L-serine = D-glyceraldehyde 3-phosphate + L-tryptophan + H2O. It participates in amino-acid biosynthesis; L-tryptophan biosynthesis; L-tryptophan from chorismate: step 5/5. Its function is as follows. The beta subunit is responsible for the synthesis of L-tryptophan from indole and L-serine. The sequence is that of Tryptophan synthase beta chain from Francisella tularensis subsp. holarctica (strain FTNF002-00 / FTA).